A 372-amino-acid chain; its full sequence is Cytochrome b (372 aa).

Helical transmembrane passes span 25–45 (FGSMLLTCSALQIMTGFFLSM), 69–90 (WMMQNLHAIGASMFFICVYIHV), 105–125 (WLSGTTLLIMLMATAFFGYVL), and 170–190 (FFALHFILPFGIISLSSLHIM). Residues histidine 75 and histidine 89 each coordinate heme b. Heme b-binding residues include histidine 174 and histidine 188. A ubiquinone is bound at residue histidine 193. 4 helical membrane passes run 218–238 (YKDLFMISSMIMIMLLTISFI), 280–300 (LGGALALAMSIMILLTVPFTH), 312–332 (FMQLMFWTLVATFMIITWTAT), and 339–358 (YTMISQVTSSLYFMFFMSNP).

The protein belongs to the cytochrome b family. In terms of assembly, the cytochrome bc1 complex contains 3 respiratory subunits (MT-CYB, CYC1 and UQCRFS1), 2 core proteins (UQCRC1 and UQCRC2) and probably 6 low-molecular weight proteins. Heme b is required as a cofactor.

It is found in the mitochondrion inner membrane. Its function is as follows. Component of the ubiquinol-cytochrome c reductase complex (complex III or cytochrome b-c1 complex) that is part of the mitochondrial respiratory chain. The b-c1 complex mediates electron transfer from ubiquinol to cytochrome c. Contributes to the generation of a proton gradient across the mitochondrial membrane that is then used for ATP synthesis. This Acrantophis madagascariensis (Madagascar ground boa) protein is Cytochrome b (MT-CYB).